The sequence spans 309 residues: HPr kinase/phosphorylase (309 aa).

Catalysis depends on residues His-138 and Lys-159. 153 to 160 (GQSGVGKS) is a binding site for ATP. A Mg(2+)-binding site is contributed by Ser-160. Residue Asp-177 is the Proton acceptor; for phosphorylation activity. Proton donor; for dephosphorylation activity of the active site. Residues 201–210 (LEIRGLGIIN) are important for the catalytic mechanism of both phosphorylation and dephosphorylation. Mg(2+) is bound at residue Glu-202. The active site involves Arg-243. Positions 264-269 (PVRPGR) are important for the catalytic mechanism of dephosphorylation.

Belongs to the HPrK/P family. As to quaternary structure, homohexamer. It depends on Mg(2+) as a cofactor.

The enzyme catalyses [HPr protein]-L-serine + ATP = [HPr protein]-O-phospho-L-serine + ADP + H(+). The catalysed reaction is [HPr protein]-O-phospho-L-serine + phosphate + H(+) = [HPr protein]-L-serine + diphosphate. Its function is as follows. Catalyzes the ATP- as well as the pyrophosphate-dependent phosphorylation of a specific serine residue in HPr, a phosphocarrier protein of the phosphoenolpyruvate-dependent sugar phosphotransferase system (PTS). HprK/P also catalyzes the pyrophosphate-producing, inorganic phosphate-dependent dephosphorylation (phosphorolysis) of seryl-phosphorylated HPr (P-Ser-HPr). The two antagonistic activities of HprK/P are regulated by several intracellular metabolites, which change their concentration in response to the absence or presence of rapidly metabolisable carbon sources (glucose, fructose, etc.) in the growth medium. Also phosphorylates/dephosphorylates the HPr-like catabolite repression protein crh on a specific serine residue. Therefore, by controlling the phosphorylation state of HPr and crh, HPrK/P is a sensor enzyme that plays a major role in the regulation of carbon metabolism and sugar transport: it mediates carbon catabolite repression (CCR), and regulates PTS-catalyzed carbohydrate uptake and inducer exclusion. This Bacillus cytotoxicus (strain DSM 22905 / CIP 110041 / 391-98 / NVH 391-98) protein is HPr kinase/phosphorylase.